The chain runs to 116 residues: Protein lin-52 homolog (116 aa).

Residues Ser28 and Ser53 each carry the phosphoserine modification.

It belongs to the lin-52 family. In terms of assembly, component of the DREAM complex (also named LINC complex) at least composed of E2F4, E2F5, LIN9, LIN37, LIN52, LIN54, MYBL1, MYBL2, RBL1, RBL2, RBBP4, TFDP1 and TFDP2. The complex exists in quiescent cells where it represses cell cycle-dependent genes. It dissociates in S phase when LIN9, LIN37, LIN52 and LIN54 form a subcomplex that binds to MYBL2.

This chain is Protein lin-52 homolog (LIN52), found in Homo sapiens (Human).